A 191-amino-acid chain; its full sequence is Signal peptidase IB (191 aa).

Residues 1–7 (MKKELLE) lie on the Cytoplasmic side of the membrane. Residues 8-28 (WIISIAVAFVILFIVGKFIVT) traverse the membrane as a helical segment. The Extracellular segment spans residues 29–191 (PYTIKGESMD…YNFNPENTKN (163 aa)). Catalysis depends on residues serine 36 and lysine 77.

This sequence belongs to the peptidase S26 family.

The protein localises to the cell membrane. It catalyses the reaction Cleavage of hydrophobic, N-terminal signal or leader sequences from secreted and periplasmic proteins.. In terms of biological role, essential for cell viability. This is Signal peptidase IB (spsB) from Staphylococcus aureus (strain MRSA252).